The sequence spans 174 residues: NADH-ubiquinone oxidoreductase chain 6 (174 aa).

A run of 4 helical transmembrane segments spans residues 25-45 (SMGL…GIYV), 48-68 (FWFS…LFIY), 82-102 (FKLT…FFIL), and 143-163 (LITL…VKIT).

Belongs to the complex I subunit 6 family.

The protein resides in the mitochondrion membrane. It carries out the reaction a ubiquinone + NADH + 5 H(+)(in) = a ubiquinol + NAD(+) + 4 H(+)(out). Its function is as follows. Core subunit of the mitochondrial membrane respiratory chain NADH dehydrogenase (Complex I) that is believed to belong to the minimal assembly required for catalysis. Complex I functions in the transfer of electrons from NADH to the respiratory chain. The immediate electron acceptor for the enzyme is believed to be ubiquinone. The polypeptide is NADH-ubiquinone oxidoreductase chain 6 (mt:ND6) (Anopheles gambiae (African malaria mosquito)).